A 284-amino-acid polypeptide reads, in one-letter code: Aspartate dehydrogenase domain-containing protein (284 aa).

The protein belongs to the L-aspartate dehydrogenase family.

The chain is Aspartate dehydrogenase domain-containing protein (aspdh) from Xenopus tropicalis (Western clawed frog).